We begin with the raw amino-acid sequence, 438 residues long: MLRTHYSNEITEELNGKRVKVAGWVQEVKDLGGIKFVWIRDREGIVQITAPKKKVSEEIFKLIPKLNSEDVVVVEGIVNFTPKAKLGFEIIPEKFEILNRTQTPLPLDPTGKVKAELDTRLDNRFIDLRNPKVMAIFKIRSNVFRAIREFFYNEGFIEIHTPKIIATATEGGTELFPIKYFENDAFLAQSPQLYKQIMMATGLDKVFETAPIFRAEEHNTTRHLNEAWSIDAEIAFIENEEEVMDVLENLVVYAINYVREHNERELKILEFELEEPKQPFPRVTYDKALEILSDLGKEIPWGEDIDTEGEKLLGKYMSENEGVELYFIYKYPSEAKPFYIMKYDEKPEICRAFDLEYRGIEISSGGQREHRYEVLLEQIKEKGLNPESFEFYLKAFKYGMPPHGGFGLGAERLIMRMLNIGNIREVILFPRDRKRLIP.

Glutamate 170 lines the L-aspartate pocket. The tract at residues glutamine 192–lysine 195 is aspartate. Arginine 214 is a binding site for L-aspartate. ATP-binding positions include arginine 214–glutamate 216, arginine 222–leucine 224, and glutamate 361. Positions 361 and 364 each coordinate Mg(2+). Residues serine 364 and arginine 368 each contribute to the L-aspartate site. Glycine 409–arginine 412 is an ATP binding site.

It belongs to the class-II aminoacyl-tRNA synthetase family. Type 2 subfamily. As to quaternary structure, homodimer. Requires Mg(2+) as cofactor.

It is found in the cytoplasm. The enzyme catalyses tRNA(Asp) + L-aspartate + ATP = L-aspartyl-tRNA(Asp) + AMP + diphosphate. Its function is as follows. Catalyzes the attachment of L-aspartate to tRNA(Asp) in a two-step reaction: L-aspartate is first activated by ATP to form Asp-AMP and then transferred to the acceptor end of tRNA(Asp). This is Aspartate--tRNA(Asp) ligase from Pyrococcus furiosus (strain ATCC 43587 / DSM 3638 / JCM 8422 / Vc1).